Here is a 385-residue protein sequence, read N- to C-terminus: Probable thioesterase PNKD (385 aa).

Over residues 32 to 42 (KASQNRTRALQ) the composition is skewed to polar residues. The disordered stretch occupies residues 32–56 (KASQNRTRALQSHSSPECKEEPEPL). Phosphoserine is present on Val121. Positions 172, 174, 176, 177, 229, 253, and 291 each coordinate Zn(2+).

The protein belongs to the metallo-beta-lactamase superfamily. Glyoxalase II family. Isoform 2 interacts with the sarcomeric proteins, MRLC2, MYOM1 and ENO3. It depends on Zn(2+) as a cofactor. In terms of processing, undergoes cleavage at the N-terminus. In terms of tissue distribution, expressed in many discrete areas of the brain.

It is found in the cell membrane. It localises to the mitochondrion. The protein resides in the cytoplasm. The enzyme catalyses a thioester + H2O = a thiol + a carboxylate + H(+). Functionally, probable thioesterase that may play a role in cellular detoxification processes; it likely acts on a yet-unknown alpha-hydroxythioester substrate. In vitro, it is able to catalyze the hydrolysis of S-D-lactoyl-glutathione to form glutathione and D-lactic acid at very low rate, though this reaction is not physiologically relevant in vivo. This is Probable thioesterase PNKD (Pnkd) from Mus musculus (Mouse).